Reading from the N-terminus, the 140-residue chain is Nucleoside diphosphate kinase (140 aa).

ATP-binding residues include K11, F59, R87, T93, R104, and N114. H117 serves as the catalytic Pros-phosphohistidine intermediate.

It belongs to the NDK family. As to quaternary structure, homotetramer. Requires Mg(2+) as cofactor.

It is found in the cytoplasm. It catalyses the reaction a 2'-deoxyribonucleoside 5'-diphosphate + ATP = a 2'-deoxyribonucleoside 5'-triphosphate + ADP. It carries out the reaction a ribonucleoside 5'-diphosphate + ATP = a ribonucleoside 5'-triphosphate + ADP. Its function is as follows. Major role in the synthesis of nucleoside triphosphates other than ATP. The ATP gamma phosphate is transferred to the NDP beta phosphate via a ping-pong mechanism, using a phosphorylated active-site intermediate. This is Nucleoside diphosphate kinase from Granulibacter bethesdensis (strain ATCC BAA-1260 / CGDNIH1).